We begin with the raw amino-acid sequence, 210 residues long: MEHHKTYHAKELQTEKGSVLIEGPISPEKLAEYEFHDELTAFRPSQKQHEALIEIAGLPEGRIIIARFRQTIVGYVTYVYPDPLERWSEGNMENLIELGAIEVIPAFRGHSVGKTLLAVSMMDPQMEKYIIITTEYYWHWDLKGTNKDVWEYRKMMEKMMNAGGLVWFATDDPEISSHPANCLMARIGKEVSQESIERFDRLRFHNRFMY.

An N-acetyltransferase domain is found at 19-189 (VLIEGPISPE…ANCLMARIGK (171 aa)).

Belongs to the acetyltransferase family. As to quaternary structure, monomer.

The protein operates within ketone degradation; acetoin degradation. Part of the acuABC operon, which is possibly involved in the breakdown of acetoin and butanediol. Acts as an acetyltransferase inactivating acetyl-CoA synthetase AcsA via acetylation at a Lys residue. This is Acetoin utilization protein AcuA from Bacillus licheniformis (strain ATCC 14580 / DSM 13 / JCM 2505 / CCUG 7422 / NBRC 12200 / NCIMB 9375 / NCTC 10341 / NRRL NRS-1264 / Gibson 46).